The primary structure comprises 426 residues: 3',5'-cyclic-nucleotide phosphodiesterase (426 aa).

A disordered region spans residues 210 to 229 (DKEDAQHHSNSNSNSNNIWG).

This sequence belongs to the cyclic nucleotide phosphodiesterase class-II family.

The enzyme catalyses a nucleoside 3',5'-cyclic phosphate + H2O = a nucleoside 5'-phosphate + H(+). The sequence is that of 3',5'-cyclic-nucleotide phosphodiesterase (PDE1) from Candida albicans (Yeast).